The sequence spans 102 residues: MADFTLSKSLFSGKYRNASSTPGNIAYALFVLFCFWAGAQLLNLLVHAPGVYERLMQVQETGRPRVEIGLGVGTIFGLIPFLVGCLIFAVVALWLHWRHRRQ.

The Cytoplasmic portion of the chain corresponds to 1–24 (MADFTLSKSLFSGKYRNASSTPGN). The helical transmembrane segment at 25 to 45 (IAYALFVLFCFWAGAQLLNLL) threads the bilayer. At 46–74 (VHAPGVYERLMQVQETGRPRVEIGLGVGT) the chain is on the periplasmic side. A helical transmembrane segment spans residues 75-95 (IFGLIPFLVGCLIFAVVALWL). At 96–102 (HWRHRRQ) the chain is on the cytoplasmic side.

The protein localises to the cell inner membrane. In Escherichia coli O157:H7, this protein is Inner membrane protein YaiY (yaiY).